We begin with the raw amino-acid sequence, 201 residues long: Glycolipid transfer protein (201 aa).

A glycolipid transfer protein homology domain region spans residues 28-168 (IATTQFLEAC…KDFYAKLGDD (141 aa)).

In terms of biological role, cargo transport protein that plays a key role in transport and secretion of liamocins, glycolipids (also called heavy oils) composed of a single mannitol or arabitol headgroup linked to either three, four or even six 3,5-dihydroxydecanoic ester tail-groups. This chain is Glycolipid transfer protein, found in Aureobasidium melanogenum (Aureobasidium pullulans var. melanogenum).